The following is a 93-amino-acid chain: Putative ribosomal protein eL43-like (93 aa).

A C4-type zinc finger spans residues Cys40–Cys61.

The protein belongs to the eukaryotic ribosomal protein eL43 family.

The sequence is that of Putative ribosomal protein eL43-like (RPL37AP8) from Homo sapiens (Human).